Consider the following 341-residue polypeptide: GTP 3',8-cyclase (341 aa).

Positions 11–231 constitute a Radical SAM core domain; the sequence is KRERPLRDLR…DLINQHMPTE (221 aa). Arg20 contacts GTP. Residues Cys27 and Cys31 each contribute to the [4Fe-4S] cluster site. Tyr33 lines the S-adenosyl-L-methionine pocket. [4Fe-4S] cluster is bound at residue Cys34. Arg75 contacts GTP. Residue Gly79 participates in S-adenosyl-L-methionine binding. A GTP-binding site is contributed by Thr106. Ser130 lines the S-adenosyl-L-methionine pocket. Lys167 provides a ligand contact to GTP. Residue Met201 participates in S-adenosyl-L-methionine binding. [4Fe-4S] cluster contacts are provided by Cys265 and Cys268. 270–272 is a GTP binding site; it reads RAR. [4Fe-4S] cluster is bound at residue Cys282.

The protein belongs to the radical SAM superfamily. MoaA family. As to quaternary structure, monomer and homodimer. The cofactor is [4Fe-4S] cluster.

It catalyses the reaction GTP + AH2 + S-adenosyl-L-methionine = (8S)-3',8-cyclo-7,8-dihydroguanosine 5'-triphosphate + 5'-deoxyadenosine + L-methionine + A + H(+). It participates in cofactor biosynthesis; molybdopterin biosynthesis. Catalyzes the cyclization of GTP to (8S)-3',8-cyclo-7,8-dihydroguanosine 5'-triphosphate. This is GTP 3',8-cyclase from Bacillus velezensis (strain DSM 23117 / BGSC 10A6 / LMG 26770 / FZB42) (Bacillus amyloliquefaciens subsp. plantarum).